The sequence spans 124 residues: T cell receptor beta variable 13 (124 aa).

A signal peptide spans 1-31 (MLSPDLPDSAWNTRLLCRVMLCLLGAGSVAA). The Ig-like domain maps to 32-124 (GVIQSPRHLI…SALYFCASSL (93 aa)). Cys-52 and Cys-120 are oxidised to a cystine. Asn-106 carries N-linked (GlcNAc...) asparagine glycosylation.

In terms of assembly, alpha-beta TR is a heterodimer composed of an alpha and beta chain; disulfide-linked. The alpha-beta TR is associated with the transmembrane signaling CD3 coreceptor proteins to form the TR-CD3 (TcR or TCR). The assembly of alpha-beta TR heterodimers with CD3 occurs in the endoplasmic reticulum where a single alpha-beta TR heterodimer associates with one CD3D-CD3E heterodimer, one CD3G-CD3E heterodimer and one CD247 homodimer forming a stable octameric structure. CD3D-CD3E and CD3G-CD3E heterodimers preferentially associate with TR alpha and TR beta chains, respectively. The association of the CD247 homodimer is the last step of TcR assembly in the endoplasmic reticulum and is required for transport to the cell surface.

The protein localises to the cell membrane. Functionally, v region of the variable domain of T cell receptor (TR) beta chain that participates in the antigen recognition. Alpha-beta T cell receptors are antigen specific receptors which are essential to the immune response and are present on the cell surface of T lymphocytes. Recognize peptide-major histocompatibility (MH) (pMH) complexes that are displayed by antigen presenting cells (APC), a prerequisite for efficient T cell adaptive immunity against pathogens. Binding of alpha-beta TR to pMH complex initiates TR-CD3 clustering on the cell surface and intracellular activation of LCK that phosphorylates the ITAM motifs of CD3G, CD3D, CD3E and CD247 enabling the recruitment of ZAP70. In turn ZAP70 phosphorylates LAT, which recruits numerous signaling molecules to form the LAT signalosome. The LAT signalosome propagates signal branching to three major signaling pathways, the calcium, the mitogen-activated protein kinase (MAPK) kinase and the nuclear factor NF-kappa-B (NF-kB) pathways, leading to the mobilization of transcription factors that are critical for gene expression and essential for T cell growth and differentiation. The T cell repertoire is generated in the thymus, by V-(D)-J rearrangement. This repertoire is then shaped by intrathymic selection events to generate a peripheral T cell pool of self-MH restricted, non-autoaggressive T cells. Post-thymic interaction of alpha-beta TR with the pMH complexes shapes TR structural and functional avidity. This chain is T cell receptor beta variable 13, found in Homo sapiens (Human).